The following is a 323-amino-acid chain: Coiled-coil domain-containing protein 160 (323 aa).

The stretch at 143-290 forms a coiled coil; that stretch reads SKLRLNLLNE…IKNELRTEKS (148 aa).

It belongs to the CCDC160 family.

The polypeptide is Coiled-coil domain-containing protein 160 (CCDC160) (Bos taurus (Bovine)).